The sequence spans 184 residues: Large ribosomal subunit protein uL6 (184 aa).

This sequence belongs to the universal ribosomal protein uL6 family. Part of the 50S ribosomal subunit.

In terms of biological role, this protein binds to the 23S rRNA, and is important in its secondary structure. It is located near the subunit interface in the base of the L7/L12 stalk, and near the tRNA binding site of the peptidyltransferase center. The polypeptide is Large ribosomal subunit protein uL6 (Cytophaga hutchinsonii (strain ATCC 33406 / DSM 1761 / CIP 103989 / NBRC 15051 / NCIMB 9469 / D465)).